Here is a 205-residue protein sequence, read N- to C-terminus: Small ribosomal subunit protein uS4 (205 aa).

Positions 1 to 16 are enriched in basic and acidic residues; it reads MSKRESAKHKIDRRLG. The segment at 1–46 is disordered; sequence MSKRESAKHKIDRRLGENIWGRPKSPVNRREYGPGQHGQRRKGKLS. Positions 94 to 157 constitute an S4 RNA-binding domain; the sequence is SRLDAVVYRA…KQLAIVLEAV (64 aa).

It belongs to the universal ribosomal protein uS4 family. In terms of assembly, part of the 30S ribosomal subunit. Contacts protein S5. The interaction surface between S4 and S5 is involved in control of translational fidelity.

In terms of biological role, one of the primary rRNA binding proteins, it binds directly to 16S rRNA where it nucleates assembly of the body of the 30S subunit. Functionally, with S5 and S12 plays an important role in translational accuracy. In Brucella abortus (strain S19), this protein is Small ribosomal subunit protein uS4.